The primary structure comprises 72 residues: Caerin-regulated peptide (72 aa).

The signal sequence occupies residues 1–22 (MAFLKKSLLLVLFLGLVSLSIC). Positions 23–43 (DEEKRENEDEEEQEDDEQSEE) are excised as a propeptide. The segment at 24–46 (EEKRENEDEEEQEDDEQSEEKRG) is disordered. The segment covering 30–41 (EDEEEQEDDEQS) has biased composition (acidic residues).

In terms of tissue distribution, expressed by the skin glands.

The protein resides in the secreted. Functionally, has antibacterial activity against Gram-positive bacterium M.luteus NCT C2665 and against Gram-negative bacterium E.coli K12D31. In Agalychnis callidryas (Red-eyed tree frog), this protein is Caerin-regulated peptide.